Consider the following 250-residue polypeptide: Glutathione transferase omega-1 (250 aa).

The 81-residue stretch at 21–101 folds into the GST N-terminal domain; that stretch reads SKGSFRVYNM…YLDDAFPETR (81 aa). Cys33 acts as the Nucleophile in catalysis. Glutathione-binding positions include Lys60 and 85–86; that span reads ES. The 129-residue stretch at 106–234 folds into the GST C-terminal domain; that stretch reads DPYEKVQQKL…TQSLEHGAAF (129 aa).

It belongs to the GST superfamily. Omega family. Homodimer. Expressed in the intestinal cells.

The protein localises to the cytoplasm. The enzyme catalyses RX + glutathione = an S-substituted glutathione + a halide anion + H(+). It carries out the reaction L-dehydroascorbate + 2 glutathione = glutathione disulfide + L-ascorbate. The catalysed reaction is methylarsonate + 2 glutathione + H(+) = methylarsonous acid + glutathione disulfide + H2O. Its function is as follows. Exhibits glutathione-dependent thiol transferase activity. Has dehydroascorbate reductase activity and may contribute to the recycling of ascorbic acid. Participates in the biotransformation of inorganic arsenic and reduces monomethylarsonic acid (MMA). Protects against environmental stress and oxidative stress. The protein is Glutathione transferase omega-1 (gsto-1) of Caenorhabditis elegans.